Reading from the N-terminus, the 158-residue chain is NADPH-dependent 7-cyano-7-deazaguanine reductase (158 aa).

Positions 1–37 are disordered; that stretch reads MAKRSIKSETSPELQLGRPVTAPDSPETARLDRVPNP. Residues 27 to 37 are compositionally biased toward basic and acidic residues; that stretch reads ETARLDRVPNP. The active-site Thioimide intermediate is the C56. D63 functions as the Proton donor in the catalytic mechanism. Residues 78 to 80 and 97 to 98 contribute to the substrate site; these read VES and HE.

The protein belongs to the GTP cyclohydrolase I family. QueF type 1 subfamily.

Its subcellular location is the cytoplasm. It catalyses the reaction 7-aminomethyl-7-carbaguanine + 2 NADP(+) = 7-cyano-7-deazaguanine + 2 NADPH + 3 H(+). Its pathway is tRNA modification; tRNA-queuosine biosynthesis. Its function is as follows. Catalyzes the NADPH-dependent reduction of 7-cyano-7-deazaguanine (preQ0) to 7-aminomethyl-7-deazaguanine (preQ1). This Bradyrhizobium sp. (strain BTAi1 / ATCC BAA-1182) protein is NADPH-dependent 7-cyano-7-deazaguanine reductase.